The chain runs to 37 residues: Large ribosomal subunit protein bL36A (37 aa).

This sequence belongs to the bacterial ribosomal protein bL36 family.

This chain is Large ribosomal subunit protein bL36A, found in Clavibacter sepedonicus (Clavibacter michiganensis subsp. sepedonicus).